Here is a 993-residue protein sequence, read N- to C-terminus: Ephrin type-A receptor 7 (993 aa).

The first 27 residues, 1–27 (MVLRSRLPPWIMLCSVWLLRFAHTGEA), serve as a signal peptide directing secretion. Residues 28 to 550 (QAAKEVILLD…TAVSSEQNPV (523 aa)) are Extracellular-facing. Residues 32–210 (EVILLDSKAQ…YYKKCWSIIE (179 aa)) form the Eph LBD domain. Fibronectin type-III domains are found at residues 331–441 (PPSA…TGQA) and 442–537 (APSQ…TLEE). 2 N-linked (GlcNAc...) asparagine glycosylation sites follow: N343 and N410. Residues 551-571 (IIIAVVAVAGTIILVFMVFGF) traverse the membrane as a helical segment. The Cytoplasmic segment spans residues 572–993 (IIGRRHCGYS…LHLHGTGIQV (422 aa)). Phosphotyrosine; by autocatalysis occurs at positions 603 and 609. Positions 628 to 889 (IKIERVIGAG…QIVGILDKMI (262 aa)) constitute a Protein kinase domain. Residues 634–642 (IGAGEFGEV) and K660 contribute to the ATP site. D753 serves as the catalytic Proton acceptor. Phosphotyrosine; by autocatalysis is present on residues Y786 and Y935. The region spanning 918–982 (TTFCSVGEWL…MSSIQTMRAQ (65 aa)) is the SAM domain. The PDZ-binding motif lies at 991–993 (IQV).

This sequence belongs to the protein kinase superfamily. Tyr protein kinase family. Ephrin receptor subfamily. In terms of assembly, heterotetramer upon binding of the ligand. The heterotetramer is composed of an ephrin dimer and a receptor dimer. Oligomerization is probably required to induce biological responses. Post-translationally, phosphorylated.

The protein resides in the cell membrane. It catalyses the reaction L-tyrosyl-[protein] + ATP = O-phospho-L-tyrosyl-[protein] + ADP + H(+). Receptor tyrosine kinase which binds promiscuously GPI-anchored ephrin-A family ligands residing on adjacent cells, leading to contact-dependent bidirectional signaling into neighboring cells. The signaling pathway downstream of the receptor is referred to as forward signaling while the signaling pathway downstream of the ephrin ligand is referred to as reverse signaling. Among GPI-anchored ephrin-A ligands, EFNA5 is a cognate/functional ligand for EPHA7 and their interaction regulates brain development modulating cell-cell adhesion and repulsion. Has a repellent activity on axons and is for instance involved in the guidance of corticothalamic axons and in the proper topographic mapping of retinal axons to the colliculus. May also regulate brain development through a caspase(CASP3)-dependent proapoptotic activity. Forward signaling may result in activation of components of the ERK signaling pathway including MAP2K1, MAP2K2, MAPK1 and MAPK3 which are phosphorylated upon activation of EPHA7. In Gallus gallus (Chicken), this protein is Ephrin type-A receptor 7 (EPHA7).